The chain runs to 375 residues: tRNA-specific 2-thiouridylase MnmA (375 aa).

ATP contacts are provided by residues 12–19 and methionine 38; that span reads GMSGGVDS. The interaction with target base in tRNA stretch occupies residues 98 to 100; that stretch reads NPD. The active-site Nucleophile is the cysteine 103. Cysteine 103 and cysteine 200 are oxidised to a cystine. An ATP-binding site is contributed by glycine 127. An interaction with tRNA region spans residues 150–152; sequence KDQ. Cysteine 200 (cysteine persulfide intermediate) is an active-site residue. An interaction with tRNA region spans residues 312 to 313; the sequence is RY.

Belongs to the MnmA/TRMU family.

The protein localises to the cytoplasm. It catalyses the reaction S-sulfanyl-L-cysteinyl-[protein] + uridine(34) in tRNA + AH2 + ATP = 2-thiouridine(34) in tRNA + L-cysteinyl-[protein] + A + AMP + diphosphate + H(+). In terms of biological role, catalyzes the 2-thiolation of uridine at the wobble position (U34) of tRNA, leading to the formation of s(2)U34. This is tRNA-specific 2-thiouridylase MnmA from Lactobacillus delbrueckii subsp. bulgaricus (strain ATCC BAA-365 / Lb-18).